The sequence spans 350 residues: Protein RecA (350 aa).

Residue 65–72 participates in ATP binding; the sequence is GPESSGKT. Positions 326-350 are disordered; the sequence is HNLKTRNTADSKVTGAKDEKSKEEK. A compositionally biased stretch (basic and acidic residues) spans 340 to 350; sequence GAKDEKSKEEK.

The protein belongs to the RecA family.

It localises to the cytoplasm. Its function is as follows. Can catalyze the hydrolysis of ATP in the presence of single-stranded DNA, the ATP-dependent uptake of single-stranded DNA by duplex DNA, and the ATP-dependent hybridization of homologous single-stranded DNAs. It interacts with LexA causing its activation and leading to its autocatalytic cleavage. The sequence is that of Protein RecA from Clostridium novyi (strain NT).